The sequence spans 1382 residues: Ninein-like protein (1382 aa).

EF-hand domains are found at residues 7–42 and 41–76; these read HYVS…LHLE and LEQQ…VLSS. A disordered region spans residues 144 to 164; sequence ASLESVESPKSDEEAESTKEA. A Phosphoserine modification is found at S148. Residues 150–164 show a composition bias toward basic and acidic residues; sequence ESPKSDEEAESTKEA. EF-hand domains lie at 196–231 and 233–268; these read TPES…VGLQ and LEKE…HEPA. D246, D248, D250, K252, and E257 together coordinate Ca(2+). Coiled-coil stretches lie at residues 384–424, 484–579, and 616–699; these read QELS…MDDC, AGLR…WARL, and IETE…QLQD. A KEN box motif is present at residues 495 to 497; it reads KEN. The short motif at 633–641 is the D-box element; it reads RTQLETKVN. 2 disordered regions span residues 857-969 and 982-1006; these read PLAW…ASCR and RARS…GALE. Residues 991–1004 are compositionally biased toward low complexity; that stretch reads QEQASEQQARAEGA. Residues 1046 to 1375 are a coiled coil; sequence ETKIALEREK…RALNKLVSRI (330 aa).

Interacts with gamma-tubulin and TUBGCP4. Interacts with anaphase promoting complex/cyclosome (APC/C). Interacts with CDC20 and FZR1. Isoform 2 interacts with LCA5 and USH2A. Isoform 2 interacts with DZANK1. Post-translationally, phosphorylated by PLK1 which disrupts its centrosome association and interaction with gamma-tubulin. Ubiquitinated by the APC/C complex leading to its degradation. Expressed in KYSE-150 esophageal carcinoma, HeLa cervical carcinoma and U2OS osteosarcoma cells. Expression is regulated in a cell cycle-dependent manner and peaks during G2/M phase (at protein level). Expressed in fetal heart, skeletal muscle, liver, lung and cochlea, and in adult brain, testis, kidney and retina.

The protein localises to the cytoplasm. It localises to the cytoskeleton. The protein resides in the microtubule organizing center. Its subcellular location is the centrosome. Involved in the microtubule organization in interphase cells. Overexpression induces the fragmentation of the Golgi, and causes lysosomes to disperse toward the cell periphery; it also interferes with mitotic spindle assembly. Involved in vesicle transport in photoreceptor cells. May play a role in ovarian carcinogenesis. This Homo sapiens (Human) protein is Ninein-like protein (NINL).